A 430-amino-acid polypeptide reads, in one-letter code: Long-chain specific acyl-CoA dehydrogenase, mitochondrial (430 aa).

The transit peptide at 1–30 (MAARLLRGSLRFLGGHCAARPLPALRCSHS) directs the protein to the mitochondrion. N6-acetyllysine is present on Lys42. Phosphoserine is present on residues Ser54 and Ser55. 2 positions are modified to N6-acetyllysine; alternate: Lys66 and Lys81. N6-succinyllysine; alternate is present on residues Lys66 and Lys81. Lys92 and Lys95 each carry N6-acetyllysine. Lys165 is subject to N6-succinyllysine. Residues 170-179 (IAMTELGAGS) and 203-205 (FIS) each bind FAD. Position 179 (Ser179) interacts with substrate. Position 227 to 228 (227 to 228 (AR)) interacts with substrate. Position 240 is an N6-succinyllysine (Lys240). An N6-acetyllysine; alternate mark is found at Lys254 and Lys279. N6-succinyllysine; alternate is present on residues Lys254 and Lys279. Substrate contacts are provided by residues Tyr282 and 289 to 292 (PQER). Glu291 serves as the catalytic Proton acceptor. Position 317 (Arg317) interacts with FAD. At Lys318 the chain carries N6-acetyllysine. The residue at position 322 (Lys322) is an N6-acetyllysine; alternate. Lys322 is subject to N6-succinyllysine; alternate. Gln328 serves as a coordination point for FAD. Lys358 is modified (N6-acetyllysine). Ser362 is modified (phosphoserine). 385–389 (QLHGG) is an FAD binding site. 412 to 413 (GG) lines the substrate pocket. Residue 414 to 416 (TNE) participates in FAD binding.

It belongs to the acyl-CoA dehydrogenase family. As to quaternary structure, homotetramer. The cofactor is FAD. Post-translationally, acetylation at Lys-318 and Lys-322 in proximity of the cofactor-binding sites strongly reduces catalytic activity. These sites are deacetylated by SIRT3.

It is found in the mitochondrion matrix. It carries out the reaction a long-chain 2,3-saturated fatty acyl-CoA + oxidized [electron-transfer flavoprotein] + H(+) = a long-chain (2E)-enoyl-CoA + reduced [electron-transfer flavoprotein]. It catalyses the reaction hexanoyl-CoA + oxidized [electron-transfer flavoprotein] + H(+) = (2E)-hexenoyl-CoA + reduced [electron-transfer flavoprotein]. The catalysed reaction is octanoyl-CoA + oxidized [electron-transfer flavoprotein] + H(+) = (2E)-octenoyl-CoA + reduced [electron-transfer flavoprotein]. The enzyme catalyses decanoyl-CoA + oxidized [electron-transfer flavoprotein] + H(+) = (2E)-decenoyl-CoA + reduced [electron-transfer flavoprotein]. It carries out the reaction dodecanoyl-CoA + oxidized [electron-transfer flavoprotein] + H(+) = (2E)-dodecenoyl-CoA + reduced [electron-transfer flavoprotein]. It catalyses the reaction tetradecanoyl-CoA + oxidized [electron-transfer flavoprotein] + H(+) = (2E)-tetradecenoyl-CoA + reduced [electron-transfer flavoprotein]. The catalysed reaction is oxidized [electron-transfer flavoprotein] + hexadecanoyl-CoA + H(+) = (2E)-hexadecenoyl-CoA + reduced [electron-transfer flavoprotein]. The enzyme catalyses octadecanoyl-CoA + oxidized [electron-transfer flavoprotein] + H(+) = (2E)-octadecenoyl-CoA + reduced [electron-transfer flavoprotein]. It carries out the reaction eicosanoyl-CoA + oxidized [electron-transfer flavoprotein] + H(+) = (2E)-eicosenoyl-CoA + reduced [electron-transfer flavoprotein]. It catalyses the reaction docosanoyl-CoA + oxidized [electron-transfer flavoprotein] + H(+) = (2E)-docosenoyl-CoA + reduced [electron-transfer flavoprotein]. The catalysed reaction is tetracosanoyl-CoA + oxidized [electron-transfer flavoprotein] + H(+) = (2E)-tetracosenoyl-CoA + reduced [electron-transfer flavoprotein]. The enzyme catalyses (5E)-tetradecenoyl-CoA + oxidized [electron-transfer flavoprotein] + H(+) = (2E,5E)-tetradecadienoyl-CoA + reduced [electron-transfer flavoprotein]. It carries out the reaction (5Z)-tetradecenoyl-CoA + oxidized [electron-transfer flavoprotein] + H(+) = (2E,5Z)-tetradecadienoyl-CoA + reduced [electron-transfer flavoprotein]. It catalyses the reaction oxidized [electron-transfer flavoprotein] + (9Z)-octadecenoyl-CoA + H(+) = (2E,9Z)-octadecadienoyl-CoA + reduced [electron-transfer flavoprotein]. The protein operates within lipid metabolism; mitochondrial fatty acid beta-oxidation. In terms of biological role, long-chain specific acyl-CoA dehydrogenase is one of the acyl-CoA dehydrogenases that catalyze the first step of mitochondrial fatty acid beta-oxidation, an aerobic process breaking down fatty acids into acetyl-CoA and allowing the production of energy from fats. The first step of fatty acid beta-oxidation consists in the removal of one hydrogen from C-2 and C-3 of the straight-chain fatty acyl-CoA thioester, resulting in the formation of trans-2-enoyl-CoA. Among the different mitochondrial acyl-CoA dehydrogenases, long-chain specific acyl-CoA dehydrogenase can act on saturated and unsaturated acyl-CoAs with 6 to 24 carbons with a preference for 8 to 18 carbons long primary chains. The sequence is that of Long-chain specific acyl-CoA dehydrogenase, mitochondrial from Macaca fascicularis (Crab-eating macaque).